Here is a 96-residue protein sequence, read N- to C-terminus: Co-chaperonin GroES (96 aa).

Belongs to the GroES chaperonin family. As to quaternary structure, heptamer of 7 subunits arranged in a ring. Interacts with the chaperonin GroEL.

The protein localises to the cytoplasm. In terms of biological role, together with the chaperonin GroEL, plays an essential role in assisting protein folding. The GroEL-GroES system forms a nano-cage that allows encapsulation of the non-native substrate proteins and provides a physical environment optimized to promote and accelerate protein folding. GroES binds to the apical surface of the GroEL ring, thereby capping the opening of the GroEL channel. This chain is Co-chaperonin GroES, found in Paraburkholderia phymatum (strain DSM 17167 / CIP 108236 / LMG 21445 / STM815) (Burkholderia phymatum).